A 227-amino-acid chain; its full sequence is Cytochrome c oxidase subunit 2 (227 aa).

Topologically, residues 1-14 are mitochondrial intermembrane; the sequence is MAYPFQLGLQDATS. Residues 15–45 form a helical membrane-spanning segment; sequence PIMEELLHFHDHTLMIVFLISSLVLYIISLM. Residues 46-59 lie on the Mitochondrial matrix side of the membrane; it reads LTTKLTHTSTMDAQ. Residues 60–87 form a helical membrane-spanning segment; that stretch reads EVETVWTILPAIILILIALPSLRILYMM. The Mitochondrial intermembrane portion of the chain corresponds to 88 to 227; sequence DEINNPSLTV…YFETWSALMV (140 aa). Positions 161, 196, 198, 200, 204, and 207 each coordinate Cu cation. Glu-198 serves as a coordination point for Mg(2+). Phosphotyrosine is present on Tyr-218.

Belongs to the cytochrome c oxidase subunit 2 family. Component of the cytochrome c oxidase (complex IV, CIV), a multisubunit enzyme composed of 14 subunits. The complex is composed of a catalytic core of 3 subunits MT-CO1, MT-CO2 and MT-CO3, encoded in the mitochondrial DNA, and 11 supernumerary subunits COX4I, COX5A, COX5B, COX6A, COX6B, COX6C, COX7A, COX7B, COX7C, COX8 and NDUFA4, which are encoded in the nuclear genome. The complex exists as a monomer or a dimer and forms supercomplexes (SCs) in the inner mitochondrial membrane with NADH-ubiquinone oxidoreductase (complex I, CI) and ubiquinol-cytochrome c oxidoreductase (cytochrome b-c1 complex, complex III, CIII), resulting in different assemblies (supercomplex SCI(1)III(2)IV(1) and megacomplex MCI(2)III(2)IV(2)). Found in a complex with TMEM177, COA6, COX18, COX20, SCO1 and SCO2. Interacts with TMEM177 in a COX20-dependent manner. Interacts with COX20. Interacts with COX16. Cu cation is required as a cofactor.

The protein localises to the mitochondrion inner membrane. The enzyme catalyses 4 Fe(II)-[cytochrome c] + O2 + 8 H(+)(in) = 4 Fe(III)-[cytochrome c] + 2 H2O + 4 H(+)(out). Component of the cytochrome c oxidase, the last enzyme in the mitochondrial electron transport chain which drives oxidative phosphorylation. The respiratory chain contains 3 multisubunit complexes succinate dehydrogenase (complex II, CII), ubiquinol-cytochrome c oxidoreductase (cytochrome b-c1 complex, complex III, CIII) and cytochrome c oxidase (complex IV, CIV), that cooperate to transfer electrons derived from NADH and succinate to molecular oxygen, creating an electrochemical gradient over the inner membrane that drives transmembrane transport and the ATP synthase. Cytochrome c oxidase is the component of the respiratory chain that catalyzes the reduction of oxygen to water. Electrons originating from reduced cytochrome c in the intermembrane space (IMS) are transferred via the dinuclear copper A center (CU(A)) of subunit 2 and heme A of subunit 1 to the active site in subunit 1, a binuclear center (BNC) formed by heme A3 and copper B (CU(B)). The BNC reduces molecular oxygen to 2 water molecules using 4 electrons from cytochrome c in the IMS and 4 protons from the mitochondrial matrix. The polypeptide is Cytochrome c oxidase subunit 2 (MT-CO2) (Canis lupus familiaris (Dog)).